The primary structure comprises 687 residues: Polyphosphate kinase (687 aa).

An ATP-binding site is contributed by N45. 2 residues coordinate Mg(2+): R375 and R405. Residue H435 is the Phosphohistidine intermediate of the active site. Positions 472, 568, and 596 each coordinate ATP.

Belongs to the polyphosphate kinase 1 (PPK1) family. It depends on Mg(2+) as a cofactor. Post-translationally, an intermediate of this reaction is the autophosphorylated ppk in which a phosphate is covalently linked to a histidine residue through a N-P bond.

The catalysed reaction is [phosphate](n) + ATP = [phosphate](n+1) + ADP. Functionally, catalyzes the reversible transfer of the terminal phosphate of ATP to form a long-chain polyphosphate (polyP). The chain is Polyphosphate kinase from Burkholderia lata (strain ATCC 17760 / DSM 23089 / LMG 22485 / NCIMB 9086 / R18194 / 383).